Consider the following 251-residue polypeptide: Carboxy-S-adenosyl-L-methionine synthase (251 aa).

S-adenosyl-L-methionine contacts are provided by residues Tyr-48, 73–75 (GCS), Asn-140, and Arg-207.

Belongs to the class I-like SAM-binding methyltransferase superfamily. Cx-SAM synthase family. In terms of assembly, homodimer.

It catalyses the reaction prephenate + S-adenosyl-L-methionine = carboxy-S-adenosyl-L-methionine + 3-phenylpyruvate + H2O. In terms of biological role, catalyzes the conversion of S-adenosyl-L-methionine (SAM) to carboxy-S-adenosyl-L-methionine (Cx-SAM). In Hydrogenovibrio crunogenus (strain DSM 25203 / XCL-2) (Thiomicrospira crunogena), this protein is Carboxy-S-adenosyl-L-methionine synthase.